The following is a 404-amino-acid chain: Pleckstrin homology domain-containing family A member 1 (404 aa).

2 consecutive PH domains span residues 7-112 (QNRI…KAIK) and 191-289 (AVIK…GAIV). 2 disordered regions span residues 291 to 332 (QRGP…RSNS) and 355 to 404 (NFKV…VSDV). The span at 316–332 (TNAATATSHSTASRSNS) shows a compositional bias: low complexity. Phosphoserine occurs at positions 332 and 362.

As to quaternary structure, interacts with MPDZ and PTPN13. Highly expressed in skeletal muscle, thymus, pancreas, placenta and lung. Detected at low levels in brain, heart, peripheral blood leukocytes, testis, ovary, spinal cord, thyroid, kidney, liver, small intestine and colon.

The protein localises to the cytoplasm. It is found in the cell membrane. Its subcellular location is the nucleus. Functionally, binds specifically to phosphatidylinositol 3,4-diphosphate (PtdIns3,4P2), but not to other phosphoinositides. May recruit other proteins to the plasma membrane. This Homo sapiens (Human) protein is Pleckstrin homology domain-containing family A member 1 (PLEKHA1).